The following is a 370-amino-acid chain: Chaperone protein DnaJ (370 aa).

One can recognise a J domain in the interval 4–68 (DYYQVLGVSK…QKRAAYDRFG (65 aa)). The CR-type zinc-finger motif lies at 133-211 (GIEKNISFSS…CHGMGRYHKQ (79 aa)). The Zn(2+) site is built by Cys146, Cys149, Cys163, Cys166, Cys185, Cys188, Cys199, and Cys202. CXXCXGXG motif repeat units follow at residues 146-153 (CDACHGTG), 163-170 (CDSCGGVG), 185-192 (CHKCQGNG), and 199-206 (CKKCHGMG).

It belongs to the DnaJ family. In terms of assembly, homodimer. The cofactor is Zn(2+).

The protein resides in the cytoplasm. Functionally, participates actively in the response to hyperosmotic and heat shock by preventing the aggregation of stress-denatured proteins and by disaggregating proteins, also in an autonomous, DnaK-independent fashion. Unfolded proteins bind initially to DnaJ; upon interaction with the DnaJ-bound protein, DnaK hydrolyzes its bound ATP, resulting in the formation of a stable complex. GrpE releases ADP from DnaK; ATP binding to DnaK triggers the release of the substrate protein, thus completing the reaction cycle. Several rounds of ATP-dependent interactions between DnaJ, DnaK and GrpE are required for fully efficient folding. Also involved, together with DnaK and GrpE, in the DNA replication of plasmids through activation of initiation proteins. This chain is Chaperone protein DnaJ, found in Rickettsia typhi (strain ATCC VR-144 / Wilmington).